A 1081-amino-acid chain; its full sequence is Zinc finger protein 827 (1081 aa).

Over residues 1-10 the composition is skewed to basic and acidic residues; that stretch reads MPRRKQEQPK. The mediates direct interaction with RBBP4 stretch occupies residues 1–14; that stretch reads MPRRKQEQPKRLPS. The segment at 1 to 77 is disordered; that stretch reads MPRRKQEQPK…DTSLGSTTPS (77 aa). Residues 3–5 carry the RRK motif; mediates NuRD recruitment to telomeres motif; the sequence is RRK. Polar residues predominate over residues 62–77; that stretch reads EQSTSPDTSLGSTTPS. Glycyl lysine isopeptide (Lys-Gly) (interchain with G-Cter in SUMO2) cross-links involve residues Lys-176, Lys-216, and Lys-226. Disordered stretches follow at residues 259–278 and 307–348; these read KVSE…ASSF and SSLL…SLEL. A compositionally biased stretch (pro residues) spans 327–344; that stretch reads VTPPPPPPPPPPPPPPPQ. Glycyl lysine isopeptide (Lys-Gly) (interchain with G-Cter in SUMO2) cross-links involve residues Lys-360 and Lys-372. C2H2-type zinc fingers lie at residues 374–396, 402–424, and 433–455; these read FQCP…MVIH, HQCP…MKVH, and FQCQ…MRCH. Glycyl lysine isopeptide (Lys-Gly) (interchain with G-Cter in SUMO2) cross-links involve residues Lys-466, Lys-475, Lys-523, Lys-549, Lys-580, Lys-587, Lys-597, Lys-634, Lys-639, and Lys-658. A Glycyl lysine isopeptide (Lys-Gly) (interchain with G-Cter in SUMO1); alternate cross-link involves residue Lys-673. Lys-673 participates in a covalent cross-link: Glycyl lysine isopeptide (Lys-Gly) (interchain with G-Cter in SUMO2); alternate. Glycyl lysine isopeptide (Lys-Gly) (interchain with G-Cter in SUMO2) cross-links involve residues Lys-704, Lys-710, Lys-742, Lys-778, and Lys-798. 2 C2H2-type zinc fingers span residues 817 to 839 and 845 to 867; these read FPCD…LSLH and YKCH…LTVH. Residues Lys-870 and Lys-891 each participate in a glycyl lysine isopeptide (Lys-Gly) (interchain with G-Cter in SUMO2) cross-link. C2H2-type zinc fingers lie at residues 897–919 and 929–952; these read YSCH…MSLH and ICCT…GTKH. Over residues 947 to 960 the composition is skewed to basic and acidic residues; that stretch reads HIGTKHTGEDRKTP. The interval 947-996 is disordered; it reads HIGTKHTGEDRKTPSESNSPSSSSLSALSDSANSKDDSDGSQKNKGGNNL. Lys-958 participates in a covalent cross-link: Glycyl lysine isopeptide (Lys-Gly) (interchain with G-Cter in SUMO2). A compositionally biased stretch (low complexity) spans 961 to 978; that stretch reads SESNSPSSSSLSALSDSA. A compositionally biased stretch (basic and acidic residues) spans 979–988; sequence NSKDDSDGSQ. Lys-1014 participates in a covalent cross-link: Glycyl lysine isopeptide (Lys-Gly) (interchain with G-Cter in SUMO2). 2 consecutive C2H2-type zinc fingers follow at residues 1019–1041 and 1047–1069; these read FECV…LQIH and FECD…KKCH.

This sequence belongs to the krueppel C2H2-type zinc-finger protein family. In terms of assembly, part of a transcription inhibitory ribonucleoprotein complex composed at least of the circular RNA circZNF827, HNRNPK and HNRNPL. Interacts with the nucleosome remodeling and histone deacetylase/NuRD complex. Interacts with RBBP4; the interaction is direct and recruits RBBP4, a component of the NuRD complex, to telomeres.

The protein localises to the nucleus. Its subcellular location is the chromosome. It is found in the telomere. In terms of biological role, as part of a ribonucleoprotein complex composed at least of HNRNPK, HNRNPL and the circular RNA circZNF827 that nucleates the complex on chromatin, may negatively regulate the transcription of genes involved in neuronal differentiation. Could also recruit the nucleosome remodeling and histone deacetylase/NuRD complex to telomeric regions of chromosomes to regulate chromatin remodeling as part of telomere maintenance. This chain is Zinc finger protein 827 (ZNF827), found in Homo sapiens (Human).